A 266-amino-acid polypeptide reads, in one-letter code: Glucosamine-6-phosphate deaminase (266 aa).

The active-site Proton acceptor; for enolization step is the D72. Catalysis depends on D141, which acts as the For ring-opening step. H143 functions as the Proton acceptor; for ring-opening step in the catalytic mechanism. Residue E148 is the For ring-opening step of the active site.

Belongs to the glucosamine/galactosamine-6-phosphate isomerase family. NagB subfamily. Homohexamer.

The enzyme catalyses alpha-D-glucosamine 6-phosphate + H2O = beta-D-fructose 6-phosphate + NH4(+). The protein operates within amino-sugar metabolism; N-acetylneuraminate degradation; D-fructose 6-phosphate from N-acetylneuraminate: step 5/5. Allosterically activated by N-acetylglucosamine 6-phosphate (GlcNAc6P). Catalyzes the reversible isomerization-deamination of glucosamine 6-phosphate (GlcN6P) to form fructose 6-phosphate (Fru6P) and ammonium ion. The chain is Glucosamine-6-phosphate deaminase from Salmonella arizonae (strain ATCC BAA-731 / CDC346-86 / RSK2980).